The sequence spans 684 residues: Glycine--tRNA ligase beta subunit (684 aa).

The protein belongs to the class-II aminoacyl-tRNA synthetase family. Tetramer of two alpha and two beta subunits.

Its subcellular location is the cytoplasm. It catalyses the reaction tRNA(Gly) + glycine + ATP = glycyl-tRNA(Gly) + AMP + diphosphate. The protein is Glycine--tRNA ligase beta subunit of Pseudomonas putida (strain ATCC 47054 / DSM 6125 / CFBP 8728 / NCIMB 11950 / KT2440).